Consider the following 418-residue polypeptide: Serine hydroxymethyltransferase (418 aa).

(6S)-5,6,7,8-tetrahydrofolate is bound by residues Leu121 and 125–127; that span reads GHL. At Lys230 the chain carries N6-(pyridoxal phosphate)lysine. 355-357 serves as a coordination point for (6S)-5,6,7,8-tetrahydrofolate; that stretch reads SPF.

This sequence belongs to the SHMT family. Homodimer. Pyridoxal 5'-phosphate is required as a cofactor.

It localises to the cytoplasm. The catalysed reaction is (6R)-5,10-methylene-5,6,7,8-tetrahydrofolate + glycine + H2O = (6S)-5,6,7,8-tetrahydrofolate + L-serine. It participates in one-carbon metabolism; tetrahydrofolate interconversion. Its pathway is amino-acid biosynthesis; glycine biosynthesis; glycine from L-serine: step 1/1. Its function is as follows. Catalyzes the reversible interconversion of serine and glycine with tetrahydrofolate (THF) serving as the one-carbon carrier. This reaction serves as the major source of one-carbon groups required for the biosynthesis of purines, thymidylate, methionine, and other important biomolecules. Also exhibits THF-independent aldolase activity toward beta-hydroxyamino acids, producing glycine and aldehydes, via a retro-aldol mechanism. The sequence is that of Serine hydroxymethyltransferase from Streptococcus pneumoniae (strain P1031).